The following is a 280-amino-acid chain: MACRGCLECLLKLLNFLLAVAGLGMIGYGIYLFVEYKRVTDNSVTFDLTNGDQSYVSFGRPILMAVSLSSNIFDNLPKAWFIYLFIGIGVALFVISCCGCVGTCSRSVCCLSCYSLLLILLILVELGFAAFIFFDNSWRDELPSDRTGNFDTIYNFLRENWKIVRWVALGAVVFEALLFLLALMVRAANTPAEYDSDDEYLAPRQQIRQPFINRQAAPVTGVPVAPTLDQRPSRSDPWSARMREKYGLDTSEFTYNPSESHRFQQMPAQPNEEKGRCTIM.

Residues methionine 1–leucine 13 lie on the Cytoplasmic side of the membrane. Residues leucine 14 to valine 34 form a helical membrane-spanning segment. Residues glutamate 35–lysine 78 lie on the Extracellular side of the membrane. A helical transmembrane segment spans residues alanine 79–glycine 99. Over cysteine 100–cysteine 113 the chain is Cytoplasmic. Residues tyrosine 114–phenylalanine 134 traverse the membrane as a helical segment. The Extracellular portion of the chain corresponds to aspartate 135–lysine 162. Residues isoleucine 163–leucine 183 traverse the membrane as a helical segment. The Cytoplasmic segment spans residues methionine 184–methionine 280. Phosphoserine occurs at positions 196 and 233. The disordered stretch occupies residues serine 258–methionine 280. A compositionally biased stretch (basic and acidic residues) spans asparagine 271 to methionine 280.

The protein belongs to the tetraspanin (TM4SF) family. Homodimer. Constituent of tobamovirus replication complex. Interacts with TOM1. As to expression, expressed in rosette leaves.

It localises to the vacuole membrane. Functionally, necessary for the efficient intracellular multiplication of tobamoviruses, being a component of the replication complex. The polypeptide is Tobamovirus multiplication protein 2A (TOM2A) (Arabidopsis thaliana (Mouse-ear cress)).